Reading from the N-terminus, the 498-residue chain is ATP synthase subunit beta, chloroplastic (498 aa).

172–179 (GGAGVGKT) lines the ATP pocket.

Belongs to the ATPase alpha/beta chains family. As to quaternary structure, F-type ATPases have 2 components, CF(1) - the catalytic core - and CF(0) - the membrane proton channel. CF(1) has five subunits: alpha(3), beta(3), gamma(1), delta(1), epsilon(1). CF(0) has four main subunits: a(1), b(1), b'(1) and c(9-12).

The protein resides in the plastid. Its subcellular location is the chloroplast thylakoid membrane. It carries out the reaction ATP + H2O + 4 H(+)(in) = ADP + phosphate + 5 H(+)(out). Its function is as follows. Produces ATP from ADP in the presence of a proton gradient across the membrane. The catalytic sites are hosted primarily by the beta subunits. This chain is ATP synthase subunit beta, chloroplastic, found in Nymphaea odorata (White water lily).